The following is a 539-amino-acid chain: Putative S-adenosyl-L-methionine-dependent methyltransferase MAP_4079 (539 aa).

S-adenosyl-L-methionine contacts are provided by residues aspartate 134 and 163-164 (DL). The interval 290–392 (AGYGRGRRRP…RGEPGERGGQ (103 aa)) is disordered. Residues 301-313 (SATSCRGTCSSPR) show a composition bias toward polar residues. A compositionally biased stretch (gly residues) spans 341 to 351 (HGFGNQCGGPD).

This sequence belongs to the UPF0677 family.

Its function is as follows. Exhibits S-adenosyl-L-methionine-dependent methyltransferase activity. This Mycolicibacterium paratuberculosis (strain ATCC BAA-968 / K-10) (Mycobacterium paratuberculosis) protein is Putative S-adenosyl-L-methionine-dependent methyltransferase MAP_4079.